The primary structure comprises 161 residues: Phosphopantetheine adenylyltransferase (161 aa).

Thr9 provides a ligand contact to substrate. Residues 9–10 and His17 each bind ATP; that span reads TF. Residues Lys41, Leu73, and Arg87 each contribute to the substrate site. ATP contacts are provided by residues 88–90, Glu98, and 123–129; these read GLR and YQFISGT.

It belongs to the bacterial CoaD family. In terms of assembly, homohexamer. It depends on Mg(2+) as a cofactor.

The protein resides in the cytoplasm. It catalyses the reaction (R)-4'-phosphopantetheine + ATP + H(+) = 3'-dephospho-CoA + diphosphate. Its pathway is cofactor biosynthesis; coenzyme A biosynthesis; CoA from (R)-pantothenate: step 4/5. Reversibly transfers an adenylyl group from ATP to 4'-phosphopantetheine, yielding dephospho-CoA (dPCoA) and pyrophosphate. The chain is Phosphopantetheine adenylyltransferase from Cupriavidus metallidurans (strain ATCC 43123 / DSM 2839 / NBRC 102507 / CH34) (Ralstonia metallidurans).